The following is a 51-amino-acid chain: Ribosome biogenesis protein Nop10 (51 aa).

This sequence belongs to the NOP10 family.

Functionally, involved in ribosome biogenesis; more specifically in 18S rRNA pseudouridylation and in cleavage of pre-rRNA. This is Ribosome biogenesis protein Nop10 from Methanococcus maripaludis (strain C6 / ATCC BAA-1332).